A 1044-amino-acid chain; its full sequence is Carbamoyl phosphate synthase large chain (1044 aa).

The carboxyphosphate synthetic domain stretch occupies residues 1 to 398 (MPKREDISKI…ALMKAIASLD (398 aa)). ATP is bound by residues R129, R169, G175, G176, R208, L210, E215, G241, V242, H243, Q284, and E296. One can recognise an ATP-grasp 1 domain in the interval 133 to 325 (HDFLISIGER…IARIAAKIAV (193 aa)). Mg(2+) contacts are provided by Q284, E296, and N298. Q284, E296, and N298 together coordinate Mn(2+). Residues 399 to 539 (IDLSYRLRLY…YSTYEDEDEL (141 aa)) form an oligomerization domain region. The carbamoyl phosphate synthetic domain stretch occupies residues 540–916 (PGISGFVAII…AIRKSILRDI (377 aa)). The region spanning 665 to 854 (SKRLEAMGID…WVELAVSAIM (190 aa)) is the ATP-grasp 2 domain. ATP-binding residues include R701, K738, L740, E745, G770, V771, H772, S773, Q813, and E825. Mg(2+) contacts are provided by Q813, E825, and N827. The Mn(2+) site is built by Q813, E825, and N827. The 134-residue stretch at 911–1044 (SILRDIKSVF…IDYREISSYH (134 aa)) folds into the MGS-like domain. The interval 916-1044 (IKSVFISVRD…IDYREISSYH (129 aa)) is allosteric domain.

The protein belongs to the CarB family. Composed of two chains; the small (or glutamine) chain promotes the hydrolysis of glutamine to ammonia, which is used by the large (or ammonia) chain to synthesize carbamoyl phosphate. Tetramer of heterodimers (alpha,beta)4. Mg(2+) serves as cofactor. The cofactor is Mn(2+).

It carries out the reaction hydrogencarbonate + L-glutamine + 2 ATP + H2O = carbamoyl phosphate + L-glutamate + 2 ADP + phosphate + 2 H(+). The catalysed reaction is hydrogencarbonate + NH4(+) + 2 ATP = carbamoyl phosphate + 2 ADP + phosphate + 2 H(+). It participates in amino-acid biosynthesis; L-arginine biosynthesis; carbamoyl phosphate from bicarbonate: step 1/1. The protein operates within pyrimidine metabolism; UMP biosynthesis via de novo pathway; (S)-dihydroorotate from bicarbonate: step 1/3. Large subunit of the glutamine-dependent carbamoyl phosphate synthetase (CPSase). CPSase catalyzes the formation of carbamoyl phosphate from the ammonia moiety of glutamine, carbonate, and phosphate donated by ATP, constituting the first step of 2 biosynthetic pathways, one leading to arginine and/or urea and the other to pyrimidine nucleotides. The large subunit (synthetase) binds the substrates ammonia (free or transferred from glutamine from the small subunit), hydrogencarbonate and ATP and carries out an ATP-coupled ligase reaction, activating hydrogencarbonate by forming carboxy phosphate which reacts with ammonia to form carbamoyl phosphate. This Thermoplasma volcanium (strain ATCC 51530 / DSM 4299 / JCM 9571 / NBRC 15438 / GSS1) protein is Carbamoyl phosphate synthase large chain.